A 273-amino-acid chain; its full sequence is Ribosomal RNA small subunit methyltransferase A (273 aa).

The S-adenosyl-L-methionine site is built by Asn-18, Leu-20, Gly-45, Glu-66, Asp-91, and Asn-113.

The protein belongs to the class I-like SAM-binding methyltransferase superfamily. rRNA adenine N(6)-methyltransferase family. RsmA subfamily.

Its subcellular location is the cytoplasm. It carries out the reaction adenosine(1518)/adenosine(1519) in 16S rRNA + 4 S-adenosyl-L-methionine = N(6)-dimethyladenosine(1518)/N(6)-dimethyladenosine(1519) in 16S rRNA + 4 S-adenosyl-L-homocysteine + 4 H(+). In terms of biological role, specifically dimethylates two adjacent adenosines (A1518 and A1519) in the loop of a conserved hairpin near the 3'-end of 16S rRNA in the 30S particle. May play a critical role in biogenesis of 30S subunits. The chain is Ribosomal RNA small subunit methyltransferase A from Salmonella agona (strain SL483).